A 328-amino-acid chain; its full sequence is MASAQDGSMEEILWRSPAHVQMMGGFLHSNNILFYFAESPFFDATSNNASLAIQANYNETLRHFVETREAFEGRLKTMQGLEFVVAYDPLQAAAQTETSFAHEPSNIWVIRKQTRRKRAGLEDEVVVLSTYFVVGDCIYMAPSVASVVGNRLLSAVTSLTSLLKTASSLPSFTPSHGHTYLPPAPKPTDSSQPGAQSQQSKENTPMPDADSTKALLVGPQTANAGAILQDTRTFAESFSLLARYGEEFMDENPLVGEPGSFILSKSGDTDRGAASKQPSNVNRPGSIPGKVGTPQVKVDTPGKTPEKGATPSASDDSKIRKKKAKIGN.

Disordered regions lie at residues 173 to 212 and 251 to 328; these read TPSH…ADST and ENPL…KIGN. Positions 188-203 are enriched in polar residues; sequence TDSSQPGAQSQQSKEN. The span at 319 to 328 shows a compositional bias: basic residues; the sequence is IRKKKAKIGN.

The protein belongs to the Mediator complex subunit 6 family. Component of the Mediator complex.

The protein localises to the nucleus. Its function is as follows. Component of the Mediator complex, a coactivator involved in the regulated transcription of nearly all RNA polymerase II-dependent genes. Mediator functions as a bridge to convey information from gene-specific regulatory proteins to the basal RNA polymerase II transcription machinery. Mediator is recruited to promoters by direct interactions with regulatory proteins and serves as a scaffold for the assembly of a functional preinitiation complex with RNA polymerase II and the general transcription factors. This Aspergillus oryzae (strain ATCC 42149 / RIB 40) (Yellow koji mold) protein is Mediator of RNA polymerase II transcription subunit 6 (med6).